The primary structure comprises 405 residues: Interferon alpha/beta receptor 1a (405 aa).

An N-terminal signal peptide occupies residues 1–20; that stretch reads MKVGFALVLLWSLPITNVLA. Over 21–233 the chain is Extracellular; that stretch reads ELPQPQNLTL…QTEGDTPYGQ (213 aa). 2 Fibronectin type-III domains span residues 22–123 and 126–228; these read LPQP…IDAS and PPSR…TEGD. Residues Asn-27 and Asn-70 are each glycosylated (N-linked (GlcNAc...) asparagine). 2 cysteine pairs are disulfide-bonded: Cys-75–Cys-83 and Cys-201–Cys-222. Asn-212 carries N-linked (GlcNAc...) asparagine glycosylation. The helical transmembrane segment at 234–254 threads the bilayer; the sequence is IFLYFLVSMMVCFLLVLLSSY. The Cytoplasmic segment spans residues 255–405; sequence AFFRFYRGLK…LDEGVVDICV (151 aa). The disordered stretch occupies residues 325–374; it reads TAPPSELEQDSGRRIRQDSGDSGIYSTEGGSAQQGRSGGEPIRRDQEVDS. Over residues 334–343 the composition is skewed to basic and acidic residues; it reads DSGRRIRQDS. The span at 348–359 shows a compositional bias: polar residues; that stretch reads IYSTEGGSAQQG.

Belongs to the type II cytokine receptor family. Heterodimer with IFNAR2; forming the receptor for type I interferon.

The protein resides in the cell membrane. Together with IFNAR2, forms the heterodimeric receptor for type I interferons (including interferons alpha, beta, epsilon, omega and kappa). Type I interferon binding activates the JAK-STAT signaling cascade, resulting in transcriptional activation or repression of interferon-regulated genes that encode the effectors of the interferon response. Mechanistically, type I interferon-binding brings the IFNAR1 and IFNAR2 subunits into close proximity with one another, driving their associated Janus kinases (JAKs) (TYK2 bound to IFNAR1 and JAK1 bound to IFNAR2) to cross-phosphorylate one another. The activated kinases phosphorylate specific tyrosine residues on the intracellular domains of IFNAR1 and IFNAR2, forming docking sites for the STAT transcription factors. STAT proteins are then phosphorylated by the JAKs, promoting their translocation into the nucleus to regulate expression of interferon-regulated genes. The chain is Interferon alpha/beta receptor 1a from Oncorhynchus mykiss (Rainbow trout).